A 140-amino-acid polypeptide reads, in one-letter code: MKKNGILNRELSYLIASMGHGDILSIVDSGFPISEDVFCVDLSLIAGKPKIVEIIIPLLEELEIEKVLIAEEIKMISPKYHQKLLSIFPKNVQIEYIPHEKFKDRVRESKGVVRTGEQTSYSSVILVGGVTYHGEKEEGL.

The Proton donor role is filled by His20. Residues Asp28, His99, and 121–123 (YSS) each bind substrate.

The protein belongs to the RbsD / FucU family. RbsD subfamily. In terms of assembly, homodecamer.

It localises to the cytoplasm. The catalysed reaction is beta-D-ribopyranose = beta-D-ribofuranose. It participates in carbohydrate metabolism; D-ribose degradation; D-ribose 5-phosphate from beta-D-ribopyranose: step 1/2. Catalyzes the interconversion of beta-pyran and beta-furan forms of D-ribose. The polypeptide is D-ribose pyranase (Pseudothermotoga lettingae (strain ATCC BAA-301 / DSM 14385 / NBRC 107922 / TMO) (Thermotoga lettingae)).